The primary structure comprises 345 residues: 3'-5' exoribonuclease 1 (345 aa).

2 stretches are compositionally biased toward basic and acidic residues: residues methionine 1 to glycine 11 and proline 19 to glycine 46. The interval methionine 1–isoleucine 50 is disordered. Phosphoserine is present on residues serine 55 and serine 58. The SAP domain occupies isoleucine 72 to tyrosine 106. Residues isoleucine 126 to alanine 302 enclose the Exonuclease domain. Aspartate 130 and glutamate 132 together coordinate Mg(2+). Glutamate 132 serves as the catalytic Proton acceptor. 2 residues coordinate AMP: glutamate 132 and alanine 133. Aspartate 230 is a binding site for Mg(2+). Histidine 289 functions as the Proton acceptor in the catalytic mechanism. An AMP-binding site is contributed by histidine 289. A Mg(2+)-binding site is contributed by aspartate 294.

Identified in a histone pre-mRNA complex, at least composed of ERI1, LSM11, SLBP, SNRPB, SYNCRIP and YBX1. Binds to 40S and 60S ribosomal subunits and to 80S assembled ribosomes. Interacts in a cooperative manner with SLBP to the mature 3'-end of histone mRNAs. Found in a ternary complex with SLBP and the stem-loop structure of the 3'-end of histone mRNAs. Requires Mg(2+) as cofactor. In terms of tissue distribution, widely expressed with high levels in spleen, thymus and testis (at protein level).

It localises to the cytoplasm. It is found in the nucleus. The protein localises to the nucleolus. It carries out the reaction Exonucleolytic cleavage in the 3'- to 5'-direction to yield nucleoside 5'-phosphates.. Although it can bind simultaneously with SLBP to the 3'-end of histone mRNA, the presence of SLBP prevents the exonuclease activity. In terms of biological role, RNA exonuclease that binds to the 3'-end of histone mRNAs and degrades them, suggesting that it plays an essential role in histone mRNA decay after replication. A 2' and 3'-hydroxyl groups at the last nucleotide of the histone 3'-end is required for efficient 3'-end histone mRNA exonuclease activity and degradation of RNA substrates. Also able to degrade the 3'-overhangs of short interfering RNAs (siRNAs) in vitro, suggesting a possible role as regulator of RNA interference (RNAi). Required for binding the 5'-ACCCA-3' sequence present in stem-loop structure. Able to bind other mRNAs. Required for 5.8S rRNA 3'-end processing. Also binds to 5.8s ribosomal RNA. Binds with high affinity to the stem-loop structure of replication-dependent histone pre-mRNAs. In vitro, does not have sequence specificity. In vitro, has weak DNA exonuclease activity. In vitro, shows biphasic kinetics such that there is rapid hydrolysis of the last three unpaired RNA nucleotides in the 39 flanking sequence followed by a much slower cleavage through the stem that occurs over a longer incubation period in the order of hours. ERI1-mediated RNA metabolism plays a key role in chondrogenesis. This is 3'-5' exoribonuclease 1 (Eri1) from Mus musculus (Mouse).